The sequence spans 330 residues: Tryptophan--tRNA ligase (330 aa).

Residues 10–12 (QAT) and 18–19 (GN) each bind ATP. A 'HIGH' region motif is present at residues 11–19 (ATGSLHLGN). Asp134 lines the L-tryptophan pocket. Residues 146–148 (GED), Ile186, and 195–199 (KMSKS) each bind ATP. The 'KMSKS' region signature appears at 195 to 199 (KMSKS).

It belongs to the class-I aminoacyl-tRNA synthetase family. As to quaternary structure, homodimer.

It localises to the cytoplasm. The catalysed reaction is tRNA(Trp) + L-tryptophan + ATP = L-tryptophyl-tRNA(Trp) + AMP + diphosphate + H(+). Functionally, catalyzes the attachment of tryptophan to tRNA(Trp). This is Tryptophan--tRNA ligase from Rickettsia conorii (strain ATCC VR-613 / Malish 7).